The sequence spans 178 residues: Nicotinamide-nucleotide adenylyltransferase (178 aa).

It belongs to the archaeal NMN adenylyltransferase family.

It is found in the cytoplasm. The catalysed reaction is beta-nicotinamide D-ribonucleotide + ATP + H(+) = diphosphate + NAD(+). It functions in the pathway cofactor biosynthesis; NAD(+) biosynthesis; NAD(+) from nicotinamide D-ribonucleotide: step 1/1. This is Nicotinamide-nucleotide adenylyltransferase from Pyrobaculum arsenaticum (strain DSM 13514 / JCM 11321 / PZ6).